The sequence spans 273 residues: 4-hydroxy-tetrahydrodipicolinate reductase (273 aa).

NAD(+)-binding positions include G8 to M13, E34, G102 to T104, and S128 to M131. H160 (proton donor/acceptor) is an active-site residue. Residue H161 participates in (S)-2,3,4,5-tetrahydrodipicolinate binding. K164 serves as the catalytic Proton donor. G170 to T171 provides a ligand contact to (S)-2,3,4,5-tetrahydrodipicolinate.

The protein belongs to the DapB family.

It is found in the cytoplasm. The enzyme catalyses (S)-2,3,4,5-tetrahydrodipicolinate + NAD(+) + H2O = (2S,4S)-4-hydroxy-2,3,4,5-tetrahydrodipicolinate + NADH + H(+). The catalysed reaction is (S)-2,3,4,5-tetrahydrodipicolinate + NADP(+) + H2O = (2S,4S)-4-hydroxy-2,3,4,5-tetrahydrodipicolinate + NADPH + H(+). Its pathway is amino-acid biosynthesis; L-lysine biosynthesis via DAP pathway; (S)-tetrahydrodipicolinate from L-aspartate: step 4/4. Functionally, catalyzes the conversion of 4-hydroxy-tetrahydrodipicolinate (HTPA) to tetrahydrodipicolinate. The chain is 4-hydroxy-tetrahydrodipicolinate reductase from Methanobrevibacter smithii (strain ATCC 35061 / DSM 861 / OCM 144 / PS).